The primary structure comprises 199 residues: Probable septum site-determining protein MinC (199 aa).

This sequence belongs to the MinC family. In terms of assembly, interacts with MinD and FtsZ.

Its function is as follows. Cell division inhibitor that blocks the formation of polar Z ring septums. Rapidly oscillates between the poles of the cell to destabilize FtsZ filaments that have formed before they mature into polar Z rings. Prevents FtsZ polymerization. This Persephonella marina (strain DSM 14350 / EX-H1) protein is Probable septum site-determining protein MinC.